A 734-amino-acid polypeptide reads, in one-letter code: Probable carboxypeptidase X1 (734 aa).

Positions 1–20 (MWGLLLALAAFAPAVGPALG) are cleaved as a signal peptide. The tract at residues 30–62 (AQPGTTKVPGSTPALHSSPAQPPAETANGTSEQ) is disordered. Residues 32–48 (PGTTKVPGSTPALHSSP) are compositionally biased toward polar residues. Residues asparagine 57, asparagine 210, asparagine 220, and asparagine 318 are each glycosylated (N-linked (GlcNAc...) asparagine). Positions 113 to 274 (TGCPPLGLES…PCLRAEILAC (162 aa)) constitute an F5/8 type C domain. A disulfide bridge links cysteine 115 with cysteine 274. Residues 298–621 (QHHNYKAMRK…DALLTYLEQV (324 aa)) enclose the Peptidase M14 domain. Zn(2+) is bound by residues histidine 360 and glutamate 363. N-linked (GlcNAc...) asparagine glycans are attached at residues asparagine 428 and asparagine 472. Histidine 498 provides a ligand contact to Zn(2+). Glutamate 591 acts as the Proton donor/acceptor in catalysis.

This sequence belongs to the peptidase M14 family. Zn(2+) is required as a cofactor.

Its subcellular location is the secreted. Functionally, may be involved in cell-cell interactions. No carboxypeptidase activity was found yet. The sequence is that of Probable carboxypeptidase X1 (CPXM1) from Homo sapiens (Human).